The sequence spans 256 residues: Imidazole glycerol phosphate synthase subunit HisF (256 aa).

Active-site residues include aspartate 12 and aspartate 131.

Belongs to the HisA/HisF family. As to quaternary structure, heterodimer of HisH and HisF.

Its subcellular location is the cytoplasm. It catalyses the reaction 5-[(5-phospho-1-deoxy-D-ribulos-1-ylimino)methylamino]-1-(5-phospho-beta-D-ribosyl)imidazole-4-carboxamide + L-glutamine = D-erythro-1-(imidazol-4-yl)glycerol 3-phosphate + 5-amino-1-(5-phospho-beta-D-ribosyl)imidazole-4-carboxamide + L-glutamate + H(+). It functions in the pathway amino-acid biosynthesis; L-histidine biosynthesis; L-histidine from 5-phospho-alpha-D-ribose 1-diphosphate: step 5/9. Functionally, IGPS catalyzes the conversion of PRFAR and glutamine to IGP, AICAR and glutamate. The HisF subunit catalyzes the cyclization activity that produces IGP and AICAR from PRFAR using the ammonia provided by the HisH subunit. The polypeptide is Imidazole glycerol phosphate synthase subunit HisF (Pseudomonas putida (strain ATCC 700007 / DSM 6899 / JCM 31910 / BCRC 17059 / LMG 24140 / F1)).